The sequence spans 176 residues: Flavodoxin 1 (176 aa).

Positions T4–S165 constitute a Flavodoxin-like domain.

This sequence belongs to the flavodoxin family. The cofactor is FMN.

Its function is as follows. Low-potential electron donor to a number of redox enzymes (Potential). Involved in the reactivation of inactive cob(II)alamin in methionine synthase. The polypeptide is Flavodoxin 1 (fldA) (Escherichia coli O157:H7).